Here is a 146-residue protein sequence, read N- to C-terminus: Cysteine protease inhibitor 3 (146 aa).

Intrachain disulfides connect C8/C60 and C109/C115.

This sequence belongs to the protease inhibitor I3 (leguminous Kunitz-type inhibitor) family.

Its subcellular location is the vacuole. Functionally, inhibitor of cysteine proteases. May protect the plant by inhibiting proteases of invading organisms. The chain is Cysteine protease inhibitor 3 from Solanum tuberosum (Potato).